Consider the following 62-residue polypeptide: Metallothionein-4 (62 aa).

Cys6, Cys8, Cys14, Cys16, Cys20, Cys22, Cys25, Cys27, Cys34, Cys35, Cys37, Cys38, Cys42, Cys45, Cys49, Cys51, Cys58, Cys60, and Cys61 together coordinate a divalent metal cation.

The protein belongs to the metallothionein superfamily. Type 1 family.

Seems to bind zinc and copper. Could play a special role in regulating zinc metabolism during the differentiation of stratified epithelia. The polypeptide is Metallothionein-4 (MT4) (Homo sapiens (Human)).